The chain runs to 452 residues: Probable ECA polymerase (452 aa).

11 helical membrane-spanning segments follow: residues 6 to 26 (FSGL…LTWF), 37 to 57 (VFFS…TSVL), 63 to 83 (VGVA…CFYG), 118 to 138 (VILM…NGFL), 155 to 175 (GVAL…VYFL), 181 to 201 (AWLF…MIVG), 207 to 227 (IIIA…ISLW), 228 to 248 (MLAA…LKRY), 341 to 361 (LVVM…GLII), 378 to 398 (YKAA…IVLA), and 410 to 430 (VFFL…FWLF).

The protein belongs to the WzyE family. As to quaternary structure, probably part of a complex composed of WzxE, WzyE and WzzE.

It localises to the cell inner membrane. The protein operates within bacterial outer membrane biogenesis; enterobacterial common antigen biosynthesis. Probably involved in the polymerization of enterobacterial common antigen (ECA) trisaccharide repeat units. The chain is Probable ECA polymerase from Salmonella heidelberg (strain SL476).